Here is a 256-residue protein sequence, read N- to C-terminus: Ribonuclease 3-like protein 1 (256 aa).

Residues 22-168 (AEVERALGGY…IVGAVYLDSK (147 aa)) enclose the RNase III domain. Glu65, Asp154, and Glu157 together coordinate Mg(2+).

Mg(2+) serves as cofactor. The cofactor is Mn(2+).

Functionally, cleaves double-stranded RNA (dsRNA). This chain is Ribonuclease 3-like protein 1, found in Oryza sativa subsp. japonica (Rice).